Reading from the N-terminus, the 2249-residue chain is Endoribonuclease Dcr-1 (2249 aa).

The tract at residues 1 to 371 is essential for miRNA substrate recognition; it reads MAFHWCDNNL…SPKVRRLLQT (371 aa). An important for interaction with loqs isoform PB (loqs-PB) region spans residues 1–690; sequence MAFHWCDNNL…SKQPPTACDI (690 aa). The segment at 1-761 is helicase domain; it reads MAFHWCDNNL…AEIDTAHSLA (761 aa). Residues 1–1042 are necessary for processing certain pre-miRNas, such as pre-let 7 and pre-bantam; it reads MAFHWCDNNL…VSLELAKERV (1042 aa). 37-44 provides a ligand contact to ATP; sequence LGHRSSKE. The segment at 371–491 is dispensable for activity and substrate recognition; the sequence is TLRCFKPEEV…HHRDHNDGSD (121 aa). Residues 436 to 486 form a disordered region; the sequence is TTEDRQTNRSAARVTPTPTPAHAKPKPSSGANTAQPRTRRRVYTRRHHRDH. Positions 472 to 484 are enriched in basic residues; the sequence is RTRRRVYTRRHHR. In terms of domain architecture, Helicase C-terminal spans 485–648; it reads DHNDGSDTLC…TGDTTEADSD (164 aa). Residues 496–606 form an essential for miRNA substrate recognition region; sequence LIYCNQNHTA…VQCKGRARAA (111 aa). A dispensable for activity and substrate recognition region spans residues 617–761; it reads SYKSPTVGSV…AEIDTAHSLA (145 aa). Disordered stretches follow at residues 640-665 and 705-757; these read GDTT…PYTF and LDTS…IDTA. Over residues 716–726 the composition is skewed to low complexity; it reads SMSNTSPSESS. The region spanning 825–920 is the Dicer dsRNA-binding fold domain; it reads AIALVNKYCA…QPIGKEGFRA (96 aa). Residues 924–957 are wing domain; the sequence is DWECFELEPEDEQIVQLSDEPRPGTTKRRQYYYK. The segment at 963–1108 is platform domain; that stretch reads FCDCRPVAGA…WQFLELIQAN (146 aa). In terms of domain architecture, PAZ spans 1100–1246; that stretch reads QFLELIQANG…LVPELCTVHP (147 aa). Residues 1147 to 2249 are essential for production of mature miRNAs from pre-miRNAs. Also important for proper formation of the siRISC complex but is dispensable for biogenesis of siRNAs; that stretch reads QYFYVAEICP…KKQGLIAKKD (1103 aa). Residues 1314–1351 form a disordered region; sequence ESKQKESLKDDTINGKDLADVEKKPTSEETQLDKDSKD. Residue Ser1423 is modified to Phosphoserine. The segment at 1426–1477 is disordered; it reads FWDVSNGESGFKGPKSSQNKQGGKGKAKGPAKPTFNYYDSDNSLGSSYDDDD. Over residues 1437–1446 the composition is skewed to low complexity; that stretch reads KGPKSSQNKQ. Polar residues predominate over residues 1462–1471; the sequence is YYDSDNSLGS. 2 RNase III domains span residues 1698-1919 and 1993-2150; these read ITSA…IECG and FEEF…LDSN. Mg(2+)-binding residues include Glu1745 and Asp1749. Ser1877 and Ser1880 each carry phosphoserine. Mg(2+) contacts are provided by Asp1905, Glu1908, Glu2032, Asp2136, and Glu2139. Residues 2175–2241 form the DRBM domain; the sequence is VPKSPIRELL…AKCALRQLKK (67 aa).

The protein belongs to the helicase family. Dicer subfamily. Component of the miRNA-directed RISC loading complex (miRLC), composed of at least Dcr-1, AGO1 and loqs, which processes pre-miRNAs and loads the resulting miRNAs into the Argonaute 1 (AGO1)-containing RNA-induced silencing complex (miRISC). Interacts (via helicase domain) with dicing cofactor loqs isoform-PB (loqs-PB) (via DRBM 3 domain); this interaction enhances processing of pre-miRNAs by increasing substrate binding affinity of the dicer. Also able to interact with loqs isoforms PA and PC, however the relevance of such interactions are unclear in vivo. Different regions of the Dcr-1-loqs-PB heterodimer collaborate to recognize, bind and position the pre-miRNA for Dcr-1 mediated cleavage. In the absence of authentic miRNA substrates, the heterodimer favors a closed, catalytically incompetent, conformation, whereas binding of authentic pre-miRNA substrates stabilizes the relatively rare open, catalytically competent, conformation of the heterodimer. During substrate recognition, the Dcr-1 PAZ domain and pre-miRNA interact with the DRBM 1 domain of loqs-PB, which likely contributes to substrate recognition and stabilization. At the miRNA binding stage, the Dcr-1 DRBM domain and loqs-PB DRBM domains then bind the pre-miRNA in tandem to form a tight 'belt' around the pre-miRNA stem, the pre-miRNA loop is docked in the loop-binding region formed by DUF283, DRBM and part of the N terminus of Dcr-1, and the loqs-PB DRBM 1 and the wing domain of Dcr-1 act together to bind the 5' and 3' pre-miRNA termini within the PAZ and platform domains of Dcr-1. These interactions between the proteins and their pre-miRNA substrate stabilize a distorted form of the pre-miRNA and position the scissile phosphodiester bonds of the pre-miRNA at the RNase III catalytic cleavage sites of Dcr-1. Following Dcr-1 mediated cleavage, the miRNA duplex remains bound to loqs-PB DRBM 1, which dissociates from the Dcr-1 RNase III 1 domain but remains in contact with the PAZ and wing domains, suggesting that the heterodimer presents the mature miRNA to Ago2 for loading into the RNA-induced silencing complex (miRISC). Interacts with AGO2 and Fmr1 to form a RNA-induced silencing complex (siRISC), a ribonucleoprotein (RNP) complex involved in translation regulation; other components of the complex are RpL5, RpL11, AGO2 and Rm62. Interacts with piwi and vas; these interactions occur in the polar granules. Requires Mg(2+) as cofactor. It depends on Mn(2+) as a cofactor.

The protein resides in the cytoplasm. It localises to the cytosol. The catalysed reaction is Endonucleolytic cleavage to 5'-phosphomonoester.. Activity towards pre-miRNAs is not inhibited by inorganic phosphate. Its function is as follows. Endoribonuclease which functions in microRNA- (miRNA) gene silencing and, independently of its ribonuclease III activity, also acts in the short interfering RNA- (siRNA) gene silencing pathway. Cleaves hairpin precursor miRNAs (pre-miRNA) to generate mature miRNAs (miRNAs) that are between twenty-one to twenty-four nucleotides in length and function in RNA silencing and post-transcriptional regulation of gene expression. Also functions in miRNA loading and assembly of the Argonaute 1 (AGO1)-containing RNA-induced silencing complex (miRISC), with the miRNAs serving as a guide to direct the miRISC to complementary RNAs to degrade them or prevent their translation. Independently of its catalytic activity, functions in the siRNA silencing pathway by promoting assembly of the siRNA-directed Argonaute 2 (AGO2)-containing RISC (siRISC). Required for the proper formation of a stable intermediate (R2) in siRISC assembly, which is formed from the R1 precursor complex (containing Dcr-2, R2D2 and the siRNA) and is used for assembly of the mature (R3) siRISC complex. It is not required for siRNA biogenesis. During embryogenesis, involved in germline fate determination. Post-transcriptionally regulates mei-P26 expression through the microRNA pathway, which in turn post-translationally regulates myc protein levels; involved in regulating cell and tissue growth. This is Endoribonuclease Dcr-1 from Drosophila melanogaster (Fruit fly).